A 187-amino-acid polypeptide reads, in one-letter code: Ribonuclease HII (187 aa).

The RNase H type-2 domain maps to 1–187 (MIILGIDEAG…YKPVQVLLNE (187 aa)). Aspartate 7, glutamate 8, and aspartate 99 together coordinate a divalent metal cation.

This sequence belongs to the RNase HII family. Mn(2+) is required as a cofactor. Mg(2+) serves as cofactor.

Its subcellular location is the cytoplasm. The enzyme catalyses Endonucleolytic cleavage to 5'-phosphomonoester.. In terms of biological role, endonuclease that specifically degrades the RNA of RNA-DNA hybrids. The polypeptide is Ribonuclease HII (Francisella tularensis subsp. mediasiatica (strain FSC147)).